The following is a 130-amino-acid chain: Protein BLT4 (130 aa).

The signal sequence occupies residues 1–25 (MARTAATKLALVPLVAAMLLVAADA). The interval 80-130 (VPARTTPAGPQASPPGAASASPTRSAPVSTALRSTDRTRAPHISSDRRLVG) is disordered. The segment covering 84–110 (TTPAGPQASPPGAASASPTRSAPVSTA) has biased composition (low complexity). Positions 113-130 (STDRTRAPHISSDRRLVG) are enriched in basic and acidic residues.

It belongs to the plant LTP family. In terms of tissue distribution, shoot meristem.

In terms of biological role, possible dehydrative stress responsive protein. Not shown to have lipid transfer activity. The sequence is that of Protein BLT4 (BLT4) from Hordeum vulgare (Barley).